Consider the following 88-residue polypeptide: Sec-independent protein translocase protein TatA (88 aa).

The helical transmembrane segment at 1–21 (MGSLSPWHWVVLVVVVVLLFG) threads the bilayer. Positions 49–71 (ENQAQASALETPMQNPTVVQSQR) are enriched in polar residues. The disordered stretch occupies residues 49 to 88 (ENQAQASALETPMQNPTVVQSQRVVPPWSTEQDHTEARPA). Residues 79–88 (EQDHTEARPA) show a composition bias toward basic and acidic residues.

The protein belongs to the TatA/E family. In terms of assembly, the Tat system comprises two distinct complexes: a TatABC complex, containing multiple copies of TatA, TatB and TatC subunits, and a separate TatA complex, containing only TatA subunits. Substrates initially bind to the TatABC complex, which probably triggers association of the separate TatA complex to form the active translocon.

The protein localises to the cell membrane. Its function is as follows. Part of the twin-arginine translocation (Tat) system that transports large folded proteins containing a characteristic twin-arginine motif in their signal peptide across membranes. TatA could form the protein-conducting channel of the Tat system. In Mycobacterium leprae (strain TN), this protein is Sec-independent protein translocase protein TatA.